The chain runs to 178 residues: uncharacterized protein (178 aa).

The N-terminal stretch at Met1–Ser19 is a signal peptide. Residues Arg52, Glu60, and Arg94 contribute to the active site.

It belongs to the thermonuclease family.

This is an uncharacterized protein from Haemophilus influenzae (strain ATCC 51907 / DSM 11121 / KW20 / Rd).